A 593-amino-acid chain; its full sequence is NADH-quinone oxidoreductase subunit C/D (593 aa).

Residues 1–184 (MTADNALYIP…DPYSLTLAKQ (184 aa)) form an NADH dehydrogenase I subunit C region. Residues 208-593 (DYMFLNLGPN…IDFVMADVDR (386 aa)) are NADH dehydrogenase I subunit D.

The protein in the N-terminal section; belongs to the complex I 30 kDa subunit family. This sequence in the C-terminal section; belongs to the complex I 49 kDa subunit family. NDH-1 is composed of 13 different subunits. Subunits NuoB, CD, E, F, and G constitute the peripheral sector of the complex.

Its subcellular location is the cell inner membrane. It carries out the reaction a quinone + NADH + 5 H(+)(in) = a quinol + NAD(+) + 4 H(+)(out). NDH-1 shuttles electrons from NADH, via FMN and iron-sulfur (Fe-S) centers, to quinones in the respiratory chain. The immediate electron acceptor for the enzyme in this species is believed to be ubiquinone. Couples the redox reaction to proton translocation (for every two electrons transferred, four hydrogen ions are translocated across the cytoplasmic membrane), and thus conserves the redox energy in a proton gradient. In Pseudomonas syringae pv. syringae (strain B728a), this protein is NADH-quinone oxidoreductase subunit C/D.